A 386-amino-acid chain; its full sequence is Protein phosphatase methylesterase 1 (386 aa).

The interval 1 to 38 (MSALEKSMHLGRLPSRPPLPGSGGSQSGAKMRMGPGRK) is disordered. S15 is subject to Phosphoserine. R16 is modified (asymmetric dimethylarginine; alternate). An Omega-N-methylarginine; alternate modification is found at R16. S42 bears the Phosphoserine mark. S156 is a catalytic residue. Positions 254 to 265 (IIEEEEEDEEGS) are enriched in acidic residues. The tract at residues 254 to 280 (IIEEEEEDEEGSESISKRKKEDDMETK) is disordered. The span at 268 to 280 (ISKRKKEDDMETK) shows a compositional bias: basic and acidic residues. Residue H349 is part of the active site.

It belongs to the AB hydrolase superfamily. In terms of assembly, binds PPP2CA and PPP2CB. Post-translationally, phosphorylated by SIK1 following increases in intracellular sodium, leading to dissociation from the protein phosphatase 2A (PP2A) complex and subsequent dephosphorylation of sodium/potassium-transporting ATPase ATP1A1.

It carries out the reaction [phosphatase 2A protein]-C-terminal L-leucine methyl ester + H2O = [phosphatase 2A protein]-C-terminal L-leucine + methanol + H(+). Functionally, demethylates proteins that have been reversibly carboxymethylated. Demethylates PPP2CB (in vitro) and PPP2CA. Binding to PPP2CA displaces the manganese ion and inactivates the enzyme. The sequence is that of Protein phosphatase methylesterase 1 (PPME1) from Pongo abelii (Sumatran orangutan).